The sequence spans 530 residues: MASAGSTARRAGSGSWHSERGEGRGARPQPTPSGSMQQANKVSLKATWTDAESKQPSQPLPDLADHLSAQATALARPRRPASLTPPRADPSPSKESDQTAIDQTAIGSYYQLFAAAVGNVEWLRFCLNQSLREIPTDDKGFTAIHFAAQWGKLACLQVLVEEYKFPVDLLTNNSQTPLHLVIHRDNTTVALPCIYYLLEKGADLNAQTCNGSTPLHLAARDGLLDCVKVLVQSGANVHAQDAMGYKPIDFCKIWNHRACARFLKDAMWKKDKKDFAREMTKMKMFKSQLTLMEHNYLIEYQKEHKILREAAIRKWLHGKLHPGHSLVSNTKQARATALSKTPEQRESQRSRSFHPSVDARLQCIPQPTEMPKPIYRKPTVKRPTMWNVSNNPARPPTTQISHSQGIRLGVHPDPTPEHDFSSFLEVRPDGHGGARLHTVDGHWVAPVPRLPFEVLLRMLYPRVWPYRMKVPQGFYPISMREVPRKRHLGDNTFWTDTLAMNLRDTFDEAFLAAVRSHQGLPTLPSPQTNP.

The span at 1–15 (MASAGSTARRAGSGS) shows a compositional bias: low complexity. The segment at 1 to 99 (MASAGSTARR…PSPSKESDQT (99 aa)) is disordered. A compositionally biased stretch (polar residues) spans 32–41 (PSGSMQQANK). ANK repeat units lie at residues 139–169 (KGFT…PVDL), 173–206 (NSQT…DLNA), and 210–239 (NGST…NVHA). 2 disordered regions span residues 323–360 (GHSL…VDAR) and 383–402 (PTMW…QISH). 2 stretches are compositionally biased toward polar residues: residues 326 to 341 (LVSN…LSKT) and 386 to 402 (WNVS…QISH).

In terms of assembly, interacts with PSRC1; recruited by PSRC1 to the spindle during mitosis. In terms of processing, phosphorylated during mitosis.

It localises to the cytoplasm. It is found in the cytoskeleton. Its subcellular location is the spindle. The protein localises to the spindle pole. Functionally, required for normal progression through mitosis. Involved in chromosome alignment and cytokinesis via regulation of microtubules polymerization. In Homo sapiens (Human), this protein is Ankyrin repeat domain-containing protein 53 (ANKRD53).